The sequence spans 698 residues: Polyribonucleotide nucleotidyltransferase (698 aa).

Residues Asp-485 and Asp-491 each coordinate Mg(2+). The KH domain occupies Pro-552–Ile-611. Residues Gly-621–Lys-689 form the S1 motif domain.

It belongs to the polyribonucleotide nucleotidyltransferase family. As to quaternary structure, component of the RNA degradosome, which is a multiprotein complex involved in RNA processing and mRNA degradation. The cofactor is Mg(2+).

It is found in the cytoplasm. The catalysed reaction is RNA(n+1) + phosphate = RNA(n) + a ribonucleoside 5'-diphosphate. Its function is as follows. Involved in mRNA degradation. Catalyzes the phosphorolysis of single-stranded polyribonucleotides processively in the 3'- to 5'-direction. This is Polyribonucleotide nucleotidyltransferase from Psychromonas ingrahamii (strain DSM 17664 / CCUG 51855 / 37).